We begin with the raw amino-acid sequence, 358 residues long: Type II restriction enzyme HpaII (358 aa).

In terms of assembly, homodimer.

The catalysed reaction is Endonucleolytic cleavage of DNA to give specific double-stranded fragments with terminal 5'-phosphates.. In terms of biological role, an E and P subtype restriction enzyme that recognizes the double-stranded sequence 5'-CCGG-3' and cleaves after C-1. The sequence is that of Type II restriction enzyme HpaII from Haemophilus parainfluenzae.